We begin with the raw amino-acid sequence, 316 residues long: Very long chain fatty acid elongase 6 (316 aa).

Residue Asn11 is glycosylated (N-linked (GlcNAc...) asparagine). The next 6 helical transmembrane spans lie at 30–50 (WMLE…LVIF), 64–84 (LRGP…MGAA), 117–137 (FWTW…IFIV), 142–162 (PLIF…WFSY), 167–189 (SSAR…YYAL), and 202–222 (MIIT…NVWA). A glycan (N-linked (GlcNAc...) asparagine) is linked at Asn242. The helical transmembrane segment at 245–265 (IAMYSSYFVLFARFFYKAYLA) threads the bilayer.

Belongs to the ELO family. ELOVL6 subfamily. As to expression, detected in the CNS (central nervous system) of third larval instar (at protein level). Expressed in cyst progenitor cells (at protein level). In the adult fly, expressed in several tissues including, sperm, follicular epithelium, nurse cells and cyst cells.

Its subcellular location is the mitochondrion outer membrane. The protein resides in the endoplasmic reticulum membrane. The catalysed reaction is a very-long-chain acyl-CoA + malonyl-CoA + H(+) = a very-long-chain 3-oxoacyl-CoA + CO2 + CoA. It carries out the reaction hexadecanoyl-CoA + malonyl-CoA + H(+) = 3-oxooctadecanoyl-CoA + CO2 + CoA. It participates in lipid metabolism; fatty acid biosynthesis. Its function is as follows. Catalyzes the first and rate-limiting reaction of the four reactions that constitute the long-chain fatty acids elongation cycle. This process allows the addition of 2 carbons to the chain of long- and very long-chain fatty acids (VLCFAs) per cycle. Condensing enzyme that elongates fatty acids with 12, 14 and 16 carbons with higher activity toward C16:0 acyl-CoAs. Catalyzes the synthesis of unsaturated C16 long chain fatty acids and, to a lesser extent, C18:0 and those with low desaturation degree. May participate in the production of saturated and monounsaturated VLCFAs of different chain lengths that are involved in multiple biological processes as precursors of membrane lipids and lipid mediators. In Drosophila melanogaster (Fruit fly), this protein is Very long chain fatty acid elongase 6.